The sequence spans 175 residues: NADH-ubiquinone oxidoreductase chain 6 (175 aa).

Helical transmembrane passes span 1-21, 25-45, 47-67, 88-108, and 149-169; these read MMTY…VSFS, SPIY…GIVL, FGGS…MLVV, AVLA…CYIL, and YGTW…LVIM.

It belongs to the complex I subunit 6 family. As to quaternary structure, core subunit of respiratory chain NADH dehydrogenase (Complex I) which is composed of 45 different subunits.

It localises to the mitochondrion inner membrane. It catalyses the reaction a ubiquinone + NADH + 5 H(+)(in) = a ubiquinol + NAD(+) + 4 H(+)(out). Its function is as follows. Core subunit of the mitochondrial membrane respiratory chain NADH dehydrogenase (Complex I) which catalyzes electron transfer from NADH through the respiratory chain, using ubiquinone as an electron acceptor. Essential for the catalytic activity and assembly of complex I. The polypeptide is NADH-ubiquinone oxidoreductase chain 6 (MT-ND6) (Felis catus (Cat)).